An 83-amino-acid chain; its full sequence is Cytochrome c oxidase subunit 7A2, mitochondrial (83 aa).

A mitochondrion-targeting transit peptide spans 1–23 (MLRNLLALRQIAKRTISTSSRRQ). At 24–48 (FENKVPEKQKLFQEDNGIPVHLKGG) the chain is on the mitochondrial matrix side. K33 is subject to N6-acetyllysine. The chain crosses the membrane as a helical span at residues 49-77 (IADALLYRATLILTVGGTAYAMYELAVAS). The Mitochondrial intermembrane segment spans residues 78–83 (FPKKQD).

This sequence belongs to the cytochrome c oxidase VIIa family. As to quaternary structure, component of the cytochrome c oxidase (complex IV, CIV), a multisubunit enzyme composed of 14 subunits. The complex is composed of a catalytic core of 3 subunits MT-CO1, MT-CO2 and MT-CO3, encoded in the mitochondrial DNA, and 11 supernumerary subunits COX4I1 (or COX4I2), COX5A, COX5B, COX6A2 (or COX6A1), COX6B1 (or COX6B2), COX6C, COX7A1 (or COX7A2), COX7B, COX7C, COX8B and NDUFA4, which are encoded in the nuclear genome. The complex exists as a monomer or a dimer and forms supercomplexes (SCs) in the inner mitochondrial membrane with NADH-ubiquinone oxidoreductase (complex I, CI) and ubiquinol-cytochrome c oxidoreductase (cytochrome b-c1 complex, complex III, CIII), resulting in different assemblies (supercomplex SCI(1)III(2)IV(1) and megacomplex MCI(2)III(2)IV(2)). Interacts with PET100.

It localises to the mitochondrion inner membrane. It functions in the pathway energy metabolism; oxidative phosphorylation. Functionally, component of the cytochrome c oxidase, the last enzyme in the mitochondrial electron transport chain which drives oxidative phosphorylation. The respiratory chain contains 3 multisubunit complexes succinate dehydrogenase (complex II, CII), ubiquinol-cytochrome c oxidoreductase (cytochrome b-c1 complex, complex III, CIII) and cytochrome c oxidase (complex IV, CIV), that cooperate to transfer electrons derived from NADH and succinate to molecular oxygen, creating an electrochemical gradient over the inner membrane that drives transmembrane transport and the ATP synthase. Cytochrome c oxidase is the component of the respiratory chain that catalyzes the reduction of oxygen to water. Electrons originating from reduced cytochrome c in the intermembrane space (IMS) are transferred via the dinuclear copper A center (CU(A)) of subunit 2 and heme A of subunit 1 to the active site in subunit 1, a binuclear center (BNC) formed by heme A3 and copper B (CU(B)). The BNC reduces molecular oxygen to 2 water molecules using 4 electrons from cytochrome c in the IMS and 4 protons from the mitochondrial matrix. This Bos taurus (Bovine) protein is Cytochrome c oxidase subunit 7A2, mitochondrial (COX7A2).